Reading from the N-terminus, the 30-residue chain is MICYSHKTPQPSATIGCEEKTCYKKSVRKL.

C3 and C22 are oxidised to a cystine.

The protein belongs to the three-finger toxin family. Short-chain subfamily. Orphan group XI sub-subfamily. In terms of processing, contains 4 disulfide bonds. As to expression, expressed by the venom gland.

It is found in the secreted. Functionally, blocks voltage-gated potassium channels (Kv). This is the slowly inactivating phase of potassium efflux which is blocked by this toxin. The sequence is that of Dendrotoxin B from Dendroaspis angusticeps (Eastern green mamba).